A 189-amino-acid chain; its full sequence is Transcription factor FapR (189 aa).

The protein belongs to the FapR family.

In terms of biological role, transcriptional factor involved in regulation of membrane lipid biosynthesis by repressing genes involved in fatty acid and phospholipid metabolism. The sequence is that of Transcription factor FapR from Listeria innocua serovar 6a (strain ATCC BAA-680 / CLIP 11262).